The following is a 261-amino-acid chain: Ribosome-inactivating protein PD-L3/PD-L4 (261 aa).

The N-linked (GlcNAc...) asparagine; in PD-L3 glycan is linked to N10. Disulfide bonds link C34-C258 and C84-C105. E175 is an active-site residue.

It belongs to the ribosome-inactivating protein family. Type 1 RIP subfamily.

It catalyses the reaction Endohydrolysis of the N-glycosidic bond at one specific adenosine on the 28S rRNA.. Its function is as follows. Inhibits protein synthesis. Does not cleave supercoiled pBR322 dsDNA. In Phytolacca dioica (Bella sombra tree), this protein is Ribosome-inactivating protein PD-L3/PD-L4.